The chain runs to 77 residues: U14-theraphotoxin-Cg1c (77 aa).

A signal peptide spans 1–21; that stretch reads MNTSDPPAVLRIAAITLLCTA. Residues 22-49 constitute a propeptide that is removed on maturation; sequence SESVEQNPLIPFENAVLGSYAKMASEKR. Intrachain disulfides connect Cys-50–Cys-64 and Cys-57–Cys-69.

Belongs to the neurotoxin 10 (Hwtx-1) family. 65 (Jztx-21) subfamily. Expressed by the venom gland.

Its subcellular location is the secreted. Its function is as follows. Probable ion channel inhibitor. In Chilobrachys guangxiensis (Chinese earth tiger tarantula), this protein is U14-theraphotoxin-Cg1c.